Here is a 165-residue protein sequence, read N- to C-terminus: MDLKSLIRDVPDFPKPGIIFRDMSPLLQNAEALSFVSHNLLKHVDLTHVDYFAGIESRGFILAAHMAATHKKGFLPIRKAGKLPPPTRKVSYALEYGTAEIELPPGRGNVVIVDDVLATGGTLQAAIDLCLLAGYSVESVAVLVNLTFLNKMTYNDQKVASLVQY.

Belongs to the purine/pyrimidine phosphoribosyltransferase family. In terms of assembly, homodimer.

The protein localises to the cytoplasm. The enzyme catalyses AMP + diphosphate = 5-phospho-alpha-D-ribose 1-diphosphate + adenine. Its pathway is purine metabolism; AMP biosynthesis via salvage pathway; AMP from adenine: step 1/1. Functionally, catalyzes a salvage reaction resulting in the formation of AMP, that is energically less costly than de novo synthesis. The sequence is that of Adenine phosphoribosyltransferase from Bdellovibrio bacteriovorus (strain ATCC 15356 / DSM 50701 / NCIMB 9529 / HD100).